The following is a 568-amino-acid chain: Fumarate hydratase 2 (568 aa).

A [4Fe-4S] cluster-binding site is contributed by Cys133. (S)-malate-binding positions include 134–135, Arg173, Gly216, and 219–225; these read QD and NKAYLYQ. Residues Cys252 and Cys346 each coordinate [4Fe-4S] cluster. (S)-malate-binding positions include Arg421, 467-471, and Lys491; that span reads TTAGR.

It belongs to the class-I fumarase family. In terms of assembly, homodimer. The cofactor is [4Fe-4S] cluster.

The protein resides in the cytoplasm. Its subcellular location is the cytosol. The catalysed reaction is (S)-malate = fumarate + H2O. Its activity is regulated as follows. Specifically and competitively inhibited by 2-thiomalate, which coordinates with the catalytic [4Fe-4S] cluster. Weakly inhibited by malonate. Functionally, cytosolic fumarate hydratase that catalyzes the reversible hydration of fumarate to (S)-malate. This chain is Fumarate hydratase 2, found in Leishmania major.